The following is a 275-amino-acid chain: Sororin-B (275 aa).

Residues 1 to 16 show a composition bias toward basic and acidic residues; the sequence is MSERKKRGSSDADSRR. Disordered stretches follow at residues 1–42 and 63–117; these read MSER…PAPI and NTGS…EIDV. Polar residues-rich tracts occupy residues 63–76 and 93–112; these read NTGS…SNVT and NAFS…QSSA. Residues 91-93 carry the KEN box motif; it reads KEN. The FGF motif motif lies at 186-188; it reads FGF. Positions 253-275 are C-terminal Sororin domain; that stretch reads VDEWAAIMNAEFDEAEKFDLTVE.

It belongs to the sororin family. As to quaternary structure, interacts with the APC/C complex. Interacts with the chromatin-bound cohesin complex; the interaction is indirect, occurs after DNA replication and requires acetylation of the cohesin component smc3. Interacts (via the FGF motif) with pds5a and pds5b; the interaction is direct and prevents the interaction of pds5a with wapl. Post-translationally, ubiquitinated by the APC/C complex in G1, leading to its degradation.

It is found in the nucleus. The protein localises to the chromosome. Its subcellular location is the cytoplasm. Its function is as follows. Regulator of sister chromatid cohesion in mitosis stabilizing cohesin complex association with chromatin. May antagonize the action of wapl which stimulates cohesin dissociation from chromatin. Cohesion ensures that chromosome partitioning is accurate in both meiotic and mitotic cells and plays an important role in DNA repair. Required for efficient DNA double-stranded break repair. The polypeptide is Sororin-B (cdca5-b) (Xenopus laevis (African clawed frog)).